The sequence spans 440 residues: Platelet-activating factor acetylhydrolase (440 aa).

The signal sequence occupies residues 1–21 (MVPLKLQALFCLLCCLPWVHP). Asparagine 59, asparagine 75, and asparagine 199 each carry an N-linked (GlcNAc...) asparagine glycan. The Nucleophile role is filled by serine 272. Active-site charge relay system residues include aspartate 295 and histidine 350.

This sequence belongs to the AB hydrolase superfamily. Lipase family. In terms of processing, N-glycosylated. In terms of tissue distribution, plasma.

The protein resides in the secreted. Its subcellular location is the extracellular space. It catalyses the reaction a 1-O-alkyl-2-acetyl-sn-glycero-3-phosphocholine + H2O = a 1-O-alkyl-sn-glycero-3-phosphocholine + acetate + H(+). The enzyme catalyses 1-O-decyl-2-acetyl-sn-glycero-3-phosphocholine + H2O = 1-O-decyl-sn-glycero-3-phosphocholine + acetate + H(+). The catalysed reaction is 1-O-dodecyl-2-acetyl-sn-glycero-3-phosphocholine + H2O = 1-O-dodecyl-sn-glycero-3-phosphocholine + acetate + H(+). It carries out the reaction 1-O-tetradecyl-2-acetyl-sn-glycero-3-phosphocholine + H2O = 1-O-tetradecyl-sn-glycero-3-phosphocholine + acetate + H(+). It catalyses the reaction 1-O-hexadecyl-2-acetyl-sn-glycero-3-phosphocholine + H2O = 1-O-hexadecyl-sn-glycero-3-phosphocholine + acetate + H(+). The enzyme catalyses 1-O-octadecyl-2-acetyl-sn-glycero-3-phosphocholine + H2O = 1-O-octadecyl-sn-glycero-3-phosphocholine + acetate + H(+). The catalysed reaction is 1-hexadecanoyl-2-acetyl-sn-glycero-3-phosphocholine + H2O = 1-hexadecanoyl-sn-glycero-3-phosphocholine + acetate + H(+). It carries out the reaction 1-hexadecanoyl-2-propionyl-sn-glycero-3-phosphocholine + H2O = propanoate + 1-hexadecanoyl-sn-glycero-3-phosphocholine + H(+). It catalyses the reaction 1-hexadecanoyl-2-butanoyl-sn-glycero-3-phosphocholine + H2O = butanoate + 1-hexadecanoyl-sn-glycero-3-phosphocholine + H(+). The enzyme catalyses 1-hexadecanoyl-2-pentanoyl-sn-glycero-3-phosphocholine + H2O = pentanoate + 1-hexadecanoyl-sn-glycero-3-phosphocholine + H(+). The catalysed reaction is 1-hexadecanoyl-2-glutaroyl-sn-glycero-3-phosphocholine + H2O = glutarate + 1-hexadecanoyl-sn-glycero-3-phosphocholine + H(+). It carries out the reaction 1-hexadecanoyl-2-(5-oxopentanoyl)-sn-glycero-3-phosphocholine + H2O = 5-oxopentanoate + 1-hexadecanoyl-sn-glycero-3-phosphocholine + H(+). It catalyses the reaction 1-hexadecanoyl-2-(9-oxononanoyl)-sn-glycero-3-phosphocholine + H2O = 9-oxononanoate + 1-hexadecanoyl-sn-glycero-3-phosphocholine + H(+). The enzyme catalyses 1-hexadecanoyl-2-[9-hydroperoxy-(10E-octadecenoyl)]-sn-glycero-3-phosphocholine + H2O = 9-hydroperoxy-10E-octadecenoate + 1-hexadecanoyl-sn-glycero-3-phosphocholine + H(+). The catalysed reaction is 1-hexadecanoyl-2-(10-hydroperoxy-8E-octadecenoyl)-sn-glycero-3-phosphocholine + H2O = 10-hydroperoxy-(8E)-octadecenoate + 1-hexadecanoyl-sn-glycero-3-phosphocholine + H(+). Its function is as follows. Lipoprotein-associated calcium-independent phospholipase A2 involved in phospholipid catabolism during inflammatory and oxidative stress response. At the lipid-aqueous interface, hydrolyzes the ester bond of fatty acyl group attached at sn-2 position of phospholipids (phospholipase A2 activity). Specifically targets phospholipids with a short-chain fatty acyl group at sn-2 position. Can hydrolyze phospholipids with long fatty acyl chains, only if they carry oxidized functional groups. Hydrolyzes and inactivates platelet-activating factor (PAF, 1-O-alkyl-2-acetyl-sn-glycero-3-phosphocholine), a potent pro-inflammatory signaling lipid that acts through PTAFR on various innate immune cells. Hydrolyzes oxidatively truncated phospholipids carrying an aldehyde group at omega position, preventing their accumulation in lipoprotein particles and uncontrolled pro-inflammatory effects. As part of high-density lipoprotein (HDL) particles, can hydrolyze phospholipids having long-chain fatty acyl hydroperoxides at sn-2 position and protect against potential accumulation of these oxylipins in the vascular wall. Catalyzes the release from membrane phospholipids of F2-isoprostanes, lipid biomarkers of cellular oxidative damage. This is Platelet-activating factor acetylhydrolase (Pla2g7) from Mus musculus (Mouse).